A 600-amino-acid chain; its full sequence is NADH-quinone oxidoreductase subunit C/D (600 aa).

Residues M1–Q190 form an NADH dehydrogenase I subunit C region. Residues D214–R600 form an NADH dehydrogenase I subunit D region.

It in the N-terminal section; belongs to the complex I 30 kDa subunit family. In the C-terminal section; belongs to the complex I 49 kDa subunit family. NDH-1 is composed of 13 different subunits. Subunits NuoB, CD, E, F, and G constitute the peripheral sector of the complex.

It localises to the cell inner membrane. The enzyme catalyses a quinone + NADH + 5 H(+)(in) = a quinol + NAD(+) + 4 H(+)(out). Functionally, NDH-1 shuttles electrons from NADH, via FMN and iron-sulfur (Fe-S) centers, to quinones in the respiratory chain. The immediate electron acceptor for the enzyme in this species is believed to be ubiquinone. Couples the redox reaction to proton translocation (for every two electrons transferred, four hydrogen ions are translocated across the cytoplasmic membrane), and thus conserves the redox energy in a proton gradient. The protein is NADH-quinone oxidoreductase subunit C/D of Escherichia coli O157:H7.